The sequence spans 171 residues: uncharacterized protein (171 aa).

Disordered stretches follow at residues 68–124 (NKNN…ASQQ) and 140–171 (GDED…SIKN). Residues 141–160 (DEDKGMDSTLKLPERTKRDS) are compositionally biased toward basic and acidic residues.

It belongs to the asfivirus H171R family.

Its subcellular location is the virion. This is an uncharacterized protein from Ornithodoros (relapsing fever ticks).